A 193-amino-acid polypeptide reads, in one-letter code: MRLCDHDIERWLDEKKLTITPRPPAKHINGATVDIRLGHEFRVFVGHKAPFIDLSAPKEEINHALDQIMSDKIVLKEKECFFLHPGELALAVTLESVTIPDDLVGWLDGRSSLARLGLMVHVTAHRIDPGWRGQIVLEFYNSGKLPLGLRPGMLIGALSFELLSGQAKRPYHQRQDAKYHNQKGAVASRIDKD.

DCTP contacts are provided by residues 110 to 115 (RSSLAR), Asp128, 136 to 138 (VLE), Tyr171, Lys178, and Gln182. Glu138 functions as the Proton donor/acceptor in the catalytic mechanism. Positions 171 to 193 (YHQRQDAKYHNQKGAVASRIDKD) are disordered.

This sequence belongs to the dCTP deaminase family. Homotrimer.

The enzyme catalyses dCTP + H2O + H(+) = dUTP + NH4(+). Its pathway is pyrimidine metabolism; dUMP biosynthesis; dUMP from dCTP (dUTP route): step 1/2. Catalyzes the deamination of dCTP to dUTP. This is dCTP deaminase from Hamiltonella defensa subsp. Acyrthosiphon pisum (strain 5AT).